We begin with the raw amino-acid sequence, 338 residues long: Ketol-acid reductoisomerase (NADP(+)) (338 aa).

Residues 1–181 form the KARI N-terminal Rossmann domain; the sequence is MNVYYDKDCD…GGGRSGIIET (181 aa). NADP(+)-binding positions include 24 to 27, R47, S50, S52, and 82 to 85; these read YGSQ and DEFQ. H107 is an active-site residue. Residue G133 coordinates NADP(+). One can recognise a KARI C-terminal knotted domain in the interval 182-327; it reads TFKDETETDL…AKLRSMMPWI (146 aa). Mg(2+)-binding residues include D190, E194, E226, and E230. S251 is a binding site for substrate.

This sequence belongs to the ketol-acid reductoisomerase family. The cofactor is Mg(2+).

It catalyses the reaction (2R)-2,3-dihydroxy-3-methylbutanoate + NADP(+) = (2S)-2-acetolactate + NADPH + H(+). The enzyme catalyses (2R,3R)-2,3-dihydroxy-3-methylpentanoate + NADP(+) = (S)-2-ethyl-2-hydroxy-3-oxobutanoate + NADPH + H(+). The protein operates within amino-acid biosynthesis; L-isoleucine biosynthesis; L-isoleucine from 2-oxobutanoate: step 2/4. It functions in the pathway amino-acid biosynthesis; L-valine biosynthesis; L-valine from pyruvate: step 2/4. Involved in the biosynthesis of branched-chain amino acids (BCAA). Catalyzes an alkyl-migration followed by a ketol-acid reduction of (S)-2-acetolactate (S2AL) to yield (R)-2,3-dihydroxy-isovalerate. In the isomerase reaction, S2AL is rearranged via a Mg-dependent methyl migration to produce 3-hydroxy-3-methyl-2-ketobutyrate (HMKB). In the reductase reaction, this 2-ketoacid undergoes a metal-dependent reduction by NADPH to yield (R)-2,3-dihydroxy-isovalerate. This chain is Ketol-acid reductoisomerase (NADP(+)), found in Psychrobacter sp. (strain PRwf-1).